Consider the following 86-residue polypeptide: Small ribosomal subunit protein bS20 (86 aa).

The protein belongs to the bacterial ribosomal protein bS20 family.

Binds directly to 16S ribosomal RNA. This is Small ribosomal subunit protein bS20 from Kineococcus radiotolerans (strain ATCC BAA-149 / DSM 14245 / SRS30216).